The primary structure comprises 252 residues: Thiazole synthase (252 aa).

The active-site Schiff-base intermediate with DXP is Lys-98. 1-deoxy-D-xylulose 5-phosphate contacts are provided by residues Gly-159, 185–186 (AG), and 207–208 (AT).

The protein belongs to the ThiG family. Homotetramer. Forms heterodimers with either ThiH or ThiS.

It localises to the cytoplasm. It carries out the reaction [ThiS sulfur-carrier protein]-C-terminal-Gly-aminoethanethioate + 2-iminoacetate + 1-deoxy-D-xylulose 5-phosphate = [ThiS sulfur-carrier protein]-C-terminal Gly-Gly + 2-[(2R,5Z)-2-carboxy-4-methylthiazol-5(2H)-ylidene]ethyl phosphate + 2 H2O + H(+). Its pathway is cofactor biosynthesis; thiamine diphosphate biosynthesis. In terms of biological role, catalyzes the rearrangement of 1-deoxy-D-xylulose 5-phosphate (DXP) to produce the thiazole phosphate moiety of thiamine. Sulfur is provided by the thiocarboxylate moiety of the carrier protein ThiS. In vitro, sulfur can be provided by H(2)S. In Mycobacterium avium (strain 104), this protein is Thiazole synthase.